We begin with the raw amino-acid sequence, 1585 residues long: Sterol 3-beta-glucosyltransferase (1585 aa).

Residues 1 to 18 (MSPPISPTPPPLQPPFPP) show a composition bias toward pro residues. Disordered regions lie at residues 1 to 154 (MSPP…CDFR), 177 to 225 (PWEE…PTHT), and 249 to 279 (YQYA…LPKG). 3 stretches are compositionally biased toward polar residues: residues 65–77 (DQAT…SLIP), 105–123 (DAQT…STHE), and 132–148 (PRTS…QMAE). The span at 178–194 (WEEDDDSDDGEDDDEFI) shows a compositional bias: acidic residues. Low complexity predominate over residues 255-273 (ETSSRRTSAAGSESSSEGE). In terms of domain architecture, GRAM 1 spans 387-555 (ERLMEVFGLE…EAIVDVEKSP (169 aa)). Residues 438–530 (LLVKSGPLHK…WVKAIQKVMF (93 aa)) form the PH domain. Disordered regions lie at residues 625–645 (TSHA…LGMA) and 666–852 (DGEP…GSES). The segment covering 670 to 689 (LEEHSQGPHHNDEDASHLPH) has biased composition (basic and acidic residues). Composition is skewed to polar residues over residues 760-785 (TDSS…QASV), 806-817 (NKPSVVDSNSAE), and 827-840 (SWTS…QMVK). The 72-residue stretch at 862–933 (RKFRTFFALS…RDLYGLKAQK (72 aa)) folds into the GRAM 2 domain. Positions 1043, 1044, 1046, 1358, 1360, 1373, 1377, 1378, 1397, and 1398 each coordinate UDP-alpha-D-glucose. The tract at residues 1499–1555 (NRVRSRSRSRSRSSQGRFSPRRHTVDDDGWSVVSGGSRSRSGSASAVTSPERRPLNI) is disordered. Low complexity predominate over residues 1529–1545 (SVVSGGSRSRSGSASAV).

Belongs to the glycosyltransferase 28 family.

It is found in the cytoplasm. The protein localises to the membrane. The enzyme catalyses a sterol + UDP-alpha-D-glucose = a sterol 3-beta-D-glucoside + UDP + H(+). The catalysed reaction is ergosterol + UDP-alpha-D-glucose = ergosteryl 3-beta-D-glucoside + UDP + H(+). Functionally, sterol glycosyltransferase responsible for the glycosylation of ergosterol to form ergosterol-glucoside. The sequence is that of Sterol 3-beta-glucosyltransferase from Cryptococcus neoformans var. neoformans serotype D (strain JEC21 / ATCC MYA-565) (Filobasidiella neoformans).